Reading from the N-terminus, the 331-residue chain is Meiotically up-regulated gene 172 protein (331 aa).

Residues 72–166 (IKNNEYEKQR…KGNYGLVKAR (95 aa)) adopt a coiled-coil conformation.

Belongs to the ADIP family.

Its subcellular location is the cytoplasm. Its function is as follows. Has a role in meiosis. This chain is Meiotically up-regulated gene 172 protein (mug172), found in Schizosaccharomyces pombe (strain 972 / ATCC 24843) (Fission yeast).